Here is a 215-residue protein sequence, read N- to C-terminus: Pyridoxine/pyridoxamine 5'-phosphate oxidase (215 aa).

Substrate contacts are provided by residues 9–12 (RRDY) and Lys-69. FMN-binding positions include 64 to 69 (RVLLLK), 79 to 80 (FT), Lys-86, and Gln-108. Residues Tyr-126, Arg-130, and Ser-134 each coordinate substrate. Residues 143-144 (QS) and Trp-188 contribute to the FMN site. 194–196 (RLH) is a binding site for substrate. Residue Arg-198 coordinates FMN.

The protein belongs to the pyridoxamine 5'-phosphate oxidase family. In terms of assembly, homodimer. Requires FMN as cofactor.

It carries out the reaction pyridoxamine 5'-phosphate + O2 + H2O = pyridoxal 5'-phosphate + H2O2 + NH4(+). The catalysed reaction is pyridoxine 5'-phosphate + O2 = pyridoxal 5'-phosphate + H2O2. Its pathway is cofactor metabolism; pyridoxal 5'-phosphate salvage; pyridoxal 5'-phosphate from pyridoxamine 5'-phosphate: step 1/1. It functions in the pathway cofactor metabolism; pyridoxal 5'-phosphate salvage; pyridoxal 5'-phosphate from pyridoxine 5'-phosphate: step 1/1. Catalyzes the oxidation of either pyridoxine 5'-phosphate (PNP) or pyridoxamine 5'-phosphate (PMP) into pyridoxal 5'-phosphate (PLP). The polypeptide is Pyridoxine/pyridoxamine 5'-phosphate oxidase (Pseudomonas entomophila (strain L48)).